We begin with the raw amino-acid sequence, 443 residues long: Chromosome partition protein MukF (443 aa).

The segment at 209–237 (LDETSGNLRELQDTLNAAGDKLQAQLLRI) is leucine-zipper.

The protein belongs to the MukF family. Interacts, and probably forms a ternary complex, with MukE and MukB via its C-terminal region. The complex formation is stimulated by calcium or magnesium. It is required for an interaction between MukE and MukB.

Its subcellular location is the cytoplasm. It is found in the nucleoid. Involved in chromosome condensation, segregation and cell cycle progression. May participate in facilitating chromosome segregation by condensation DNA from both sides of a centrally located replisome during cell division. Not required for mini-F plasmid partitioning. Probably acts via its interaction with MukB and MukE. Overexpression results in anucleate cells. It has a calcium binding activity. This Actinobacillus pleuropneumoniae serotype 7 (strain AP76) protein is Chromosome partition protein MukF.